Here is a 375-residue protein sequence, read N- to C-terminus: DNA replication and repair protein RecF (375 aa).

Residue 30–37 (GENAQGKT) participates in ATP binding.

Belongs to the RecF family.

The protein resides in the cytoplasm. Its function is as follows. The RecF protein is involved in DNA metabolism; it is required for DNA replication and normal SOS inducibility. RecF binds preferentially to single-stranded, linear DNA. It also seems to bind ATP. The polypeptide is DNA replication and repair protein RecF (Bacillus mycoides (strain KBAB4) (Bacillus weihenstephanensis)).